The primary structure comprises 493 residues: Cytochrome c-552 (493 aa).

Residues 1-25 form the signal peptide; it reads MEKKLKSWQGWLLFCGAMAVVFVLG. Heme c is bound at residue H116. Heme contacts are provided by C144, C147, and K148. Residues C182, C185, H186, C224, C227, and H228 each contribute to the heme c site. Positions 230, 231, 276, and 278 each coordinate Ca(2+). Y231 is a substrate binding site. H279 contributes to the substrate binding site. Heme c contacts are provided by H290, C297, C300, H301, H315, C328, C331, H332, and H407.

It belongs to the cytochrome c-552 family. Ca(2+) serves as cofactor. Requires heme c as cofactor.

It localises to the periplasm. It catalyses the reaction 6 Fe(III)-[cytochrome c] + NH4(+) + 2 H2O = 6 Fe(II)-[cytochrome c] + nitrite + 8 H(+). Its pathway is nitrogen metabolism; nitrate reduction (assimilation). In terms of biological role, catalyzes the reduction of nitrite to ammonia, consuming six electrons in the process. The chain is Cytochrome c-552 from Bacteroides fragilis (strain ATCC 25285 / DSM 2151 / CCUG 4856 / JCM 11019 / LMG 10263 / NCTC 9343 / Onslow / VPI 2553 / EN-2).